Here is a 183-residue protein sequence, read N- to C-terminus: Capsid protein (183 aa).

The segment at 136–183 is disordered; that stretch reads NAPILSTLPETTVVRRRGRSPRRRTPSPRRRRSQSPRRRRSQSRESQC. Residues 149 to 176 are compositionally biased toward basic residues; it reads VRRRGRSPRRRTPSPRRRRSQSPRRRRS. Phosphoserine; by host is present on residues S155, S162, and S170. A 1; half-length repeat occupies 155–161; it reads SPRRRTP. The segment at 155–177 is 3 X 8 AA repeats of S-P-R-R-R-[PR]-S-Q; the sequence is SPRRRTPSPRRRRSQSPRRRRSQ. Residues 158–175 carry the Bipartite nuclear localization signal motif; that stretch reads RRTPSPRRRRSQSPRRRR. A run of 2 repeats spans residues 162 to 169 and 170 to 177. Residues 177–183 form an RNA binding region; the sequence is QSRESQC.

It belongs to the orthohepadnavirus core antigen family. Homodimerizes, then multimerizes. Interacts with cytosol exposed regions of viral L glycoprotein present in the reticulum-to-Golgi compartment. Interacts with human FLNB. Phosphorylated form interacts with host importin alpha; this interaction depends on the exposure of the NLS, which itself depends upon genome maturation and/or phosphorylation of the capsid protein. Interacts with host NUP153. In terms of processing, phosphorylated by host SRPK1, SRPK2, and maybe protein kinase C or GAPDH. Phosphorylation is critical for pregenomic RNA packaging. Protein kinase C phosphorylation is stimulated by HBx protein and may play a role in transport of the viral genome to the nucleus at the late step during the viral replication cycle.

The protein localises to the virion. It localises to the host cytoplasm. Self assembles to form an icosahedral capsid. Most capsids appear to be large particles with an icosahedral symmetry of T=4 and consist of 240 copies of capsid protein, though a fraction forms smaller T=3 particles consisting of 180 capsid proteins. Entering capsids are transported along microtubules to the nucleus. Phosphorylation of the capsid is thought to induce exposure of nuclear localization signal in the C-terminal portion of the capsid protein that allows binding to the nuclear pore complex via the importin (karyopherin-) alpha and beta. Capsids are imported in intact form through the nuclear pore into the nuclear basket, where it probably binds NUP153. Only capsids that contain the mature viral genome can release the viral DNA and capsid protein into the nucleoplasm. Immature capsids get stuck in the basket. Capsids encapsulate the pre-genomic RNA and the P protein. Pre-genomic RNA is reverse-transcribed into DNA while the capsid is still in the cytoplasm. The capsid can then either be directed to the nucleus, providing more genomes for transcription, or bud through the endoplasmic reticulum to provide new virions. This chain is Capsid protein, found in Homo sapiens (Human).